Reading from the N-terminus, the 155-residue chain is Protein SREK1IP1 (155 aa).

Residues 13–30 (AGCKKCGYPGHLTFECRN) form a CCHC-type zinc finger. Residues 44-155 (VSSTSSEDSD…TPNSSEFSRK (112 aa)) form a disordered region. At S52 the chain carries Phosphoserine. Residues 66–84 (QEKRINEEEEKKKEKSKEK) are compositionally biased toward basic and acidic residues. Residues 85–94 (IKLKKKRKRS) show a composition bias toward basic residues. 2 positions are modified to phosphoserine: S96 and S97. Over residues 107 to 142 (QKKQKYQKKEKKKEKKSKSKKGKHHKKEKKKRKKEK) the composition is skewed to basic residues. T146 carries the post-translational modification Phosphothreonine. Positions 146 to 155 (TPNSSEFSRK) are enriched in polar residues.

In terms of assembly, interacts with SREK1/SFRS12.

In terms of biological role, possible splicing regulator involved in the control of cellular survival. The protein is Protein SREK1IP1 (SREK1IP1) of Homo sapiens (Human).